The following is a 146-amino-acid chain: Hemoglobin subunit beta-1 (146 aa).

In terms of domain architecture, Globin spans 2–146; that stretch reads HWTAEEKHLL…VAHALARRYH (145 aa). The heme b site is built by His63 and His92.

The protein belongs to the globin family. There are three forms of hemoglobin in Sphenodon: A, A' and D. Hb A is a tetramer of two alpha-A and two beta-1, Hb A' is a tetramer of two alpha-a and two beta-2, Hb D is a tetramer of two alpha-D and two beta-2.

Functionally, involved in oxygen transport from the lung to the various peripheral tissues. The polypeptide is Hemoglobin subunit beta-1 (HBB1) (Sphenodon punctatus (Tuatara)).